The primary structure comprises 114 residues: Fatty acid-binding protein, liver (114 aa).

The protein belongs to the calycin superfamily. Fatty-acid binding protein (FABP) family. The N-terminus is blocked.

The protein resides in the cytoplasm. Functionally, FABPs are thought to play a role in the intracellular transport of long-chain fatty acids and their acyl-CoA esters. This chain is Fatty acid-binding protein, liver, found in Lethenteron camtschaticum (Japanese lamprey).